We begin with the raw amino-acid sequence, 260 residues long: Coiled-coil domain-containing protein 127 (260 aa).

The stretch at 76–139 (AVISEHRRAV…EKSRLQPLRN (64 aa)) forms a coiled coil.

The polypeptide is Coiled-coil domain-containing protein 127 (Ccdc127) (Mus musculus (Mouse)).